We begin with the raw amino-acid sequence, 211 residues long: FMN-dependent NADH:quinone oxidoreductase (211 aa).

FMN contacts are provided by residues 17-19 (SNS), 102-105 (MWNL), and 146-149 (SRGG).

Belongs to the azoreductase type 1 family. Homodimer. The cofactor is FMN.

The enzyme catalyses 2 a quinone + NADH + H(+) = 2 a 1,4-benzosemiquinone + NAD(+). It catalyses the reaction N,N-dimethyl-1,4-phenylenediamine + anthranilate + 2 NAD(+) = 2-(4-dimethylaminophenyl)diazenylbenzoate + 2 NADH + 2 H(+). Its function is as follows. Quinone reductase that provides resistance to thiol-specific stress caused by electrophilic quinones. Also exhibits azoreductase activity. Catalyzes the reductive cleavage of the azo bond in aromatic azo compounds to the corresponding amines. The polypeptide is FMN-dependent NADH:quinone oxidoreductase (Macrococcus caseolyticus (strain JCSC5402) (Macrococcoides caseolyticum)).